Consider the following 659-residue polypeptide: Alpha-galactosidase D (659 aa).

The signal sequence occupies residues 1-20 (MRALVPMVVAATALASPAPA). Asn-48, Asn-86, and Asn-130 each carry an N-linked (GlcNAc...) asparagine glycan. Residues Cys-125 and Cys-158 are joined by a disulfide bond. Asp-156 serves as the catalytic Nucleophile. The N-linked (GlcNAc...) asparagine glycan is linked to Asn-183. Position 201-205 (201-205 (EWGID)) interacts with substrate. Asp-223 acts as the Proton donor in catalysis. N-linked (GlcNAc...) asparagine glycans are attached at residues Asn-438, Asn-450, Asn-484, Asn-551, and Asn-583.

The protein belongs to the glycosyl hydrolase 27 family.

The protein localises to the secreted. The enzyme catalyses Hydrolysis of terminal, non-reducing alpha-D-galactose residues in alpha-D-galactosides, including galactose oligosaccharides, galactomannans and galactolipids.. Its function is as follows. Hydrolyzes a variety of simple alpha-D-galactoside as well as more complex molecules such as oligosaccharides and polysaccharides. Active on paranitrophenyl-alpha-galactoside but not on raffinose, locust bean gum and gum guar. The polypeptide is Alpha-galactosidase D (aglD) (Emericella nidulans (strain FGSC A4 / ATCC 38163 / CBS 112.46 / NRRL 194 / M139) (Aspergillus nidulans)).